A 317-amino-acid chain; its full sequence is Beta-ketoacyl-[acyl-carrier-protein] synthase III (317 aa).

Active-site residues include Cys112 and His244. The ACP-binding stretch occupies residues 245 to 249; sequence QANVR. The active site involves Asn274.

Belongs to the thiolase-like superfamily. FabH family. As to quaternary structure, homodimer.

It localises to the cytoplasm. The enzyme catalyses malonyl-[ACP] + acetyl-CoA + H(+) = 3-oxobutanoyl-[ACP] + CO2 + CoA. It functions in the pathway lipid metabolism; fatty acid biosynthesis. Functionally, catalyzes the condensation reaction of fatty acid synthesis by the addition to an acyl acceptor of two carbons from malonyl-ACP. Catalyzes the first condensation reaction which initiates fatty acid synthesis and may therefore play a role in governing the total rate of fatty acid production. Possesses both acetoacetyl-ACP synthase and acetyl transacylase activities. Its substrate specificity determines the biosynthesis of branched-chain and/or straight-chain of fatty acids. In Rickettsia bellii (strain OSU 85-389), this protein is Beta-ketoacyl-[acyl-carrier-protein] synthase III.